Reading from the N-terminus, the 499-residue chain is Probable alpha-L-arabinofuranosidase B (499 aa).

Positions 1 to 18 are cleaved as a signal peptide; it reads MFSRRNLVALGLAATVSA. The tract at residues 19 to 335 is catalytic; that stretch reads GPCDIYEAGD…ENIVAAKYVS (317 aa). 3 disulfide bridges follow: C21–C31, C81–C86, and C176–C177. N-linked (GlcNAc...) asparagine glycosylation is present at N83. N-linked (GlcNAc...) asparagine glycosylation is present at N202. Position 219 (D219) interacts with substrate. Residue E221 is the Nucleophile of the active site. N222, N223, and G296 together coordinate substrate. Catalysis depends on D297, which acts as the Proton donor. Residues 336 to 499 form an ABD region; the sequence is GSLVSGPSFT…SFEIETAFAS (164 aa). C401 and C439 form a disulfide bridge. Substrate is bound by residues H416, N418, F419, D435, H463, D465, L468, and D488.

It belongs to the glycosyl hydrolase 54 family.

It localises to the secreted. The enzyme catalyses Hydrolysis of terminal non-reducing alpha-L-arabinofuranoside residues in alpha-L-arabinosides.. Its pathway is glycan metabolism; L-arabinan degradation. Alpha-L-arabinofuranosidase involved in the degradation of arabinoxylan, a major component of plant hemicellulose. Able to hydrolyze 1,5-, 1,3- and 1,2-alpha-linkages not only in L-arabinofuranosyl oligosaccharides, but also in polysaccharides containing terminal non-reducing L-arabinofuranoses in side chains, like L-arabinan, arabinogalactan and arabinoxylan. This Aspergillus niger (strain ATCC MYA-4892 / CBS 513.88 / FGSC A1513) protein is Probable alpha-L-arabinofuranosidase B (abfB).